Reading from the N-terminus, the 137-residue chain is Endoribonuclease YbeY (137 aa).

Residues His105, His109, and Asp115 each contribute to the Zn(2+) site.

The protein belongs to the endoribonuclease YbeY family. It depends on Zn(2+) as a cofactor.

It is found in the cytoplasm. In terms of biological role, single strand-specific metallo-endoribonuclease involved in late-stage 70S ribosome quality control and in maturation of the 3' terminus of the 16S rRNA. In Chlorobium luteolum (strain DSM 273 / BCRC 81028 / 2530) (Pelodictyon luteolum), this protein is Endoribonuclease YbeY.